The chain runs to 284 residues: Probable palmitoyltransferase ZDHHC24 (284 aa).

At 1–18 (MGQPWAAGSTDGAPAQLP) the chain is on the cytoplasmic side. A helical membrane pass occupies residues 19–39 (LVLTALWAAAVGLELAYVLVL). Residues 40–52 (GPGPPPLGPLARA) are Extracellular-facing. The chain crosses the membrane as a helical span at residues 53 to 73 (LQLALAAFQLLNLLGNVGLFL). The Cytoplasmic portion of the chain corresponds to 74-137 (RSDPSIRGVM…GRCVGFGNYR (64 aa)). The 51-residue stretch at 94-144 (AYCYQCQSQVPPRSGHCSACRVCILRRDHHCRLLGRCVGFGNYRPFLCLLL) folds into the DHHC domain. C124 serves as the catalytic S-palmitoyl cysteine intermediate. Residues 138–158 (PFLCLLLHAAGVLLHVSVLLG) traverse the membrane as a helical segment. The Extracellular portion of the chain corresponds to 159-166 (PALSALLR). Residues 167–187 (AHTPLHMAALLLLPWLMLLTG) traverse the membrane as a helical segment. Residues 188–201 (RVSLAQFALAFVTD) lie on the Cytoplasmic side of the membrane. Residues 202-222 (TCVAGALLCGAGLLFHGMLLL) form a helical membrane-spanning segment. Residues 223-284 (RGQTTWEWAR…TTADVGHTAS (62 aa)) are Extracellular-facing.

Belongs to the DHHC palmitoyltransferase family.

The protein localises to the membrane. The catalysed reaction is L-cysteinyl-[protein] + hexadecanoyl-CoA = S-hexadecanoyl-L-cysteinyl-[protein] + CoA. In terms of biological role, probable palmitoyltransferase that could catalyze the addition of palmitate onto various protein substrates. This chain is Probable palmitoyltransferase ZDHHC24, found in Homo sapiens (Human).